The sequence spans 1398 residues: DNA-directed RNA polymerase subunit beta' (1398 aa).

Zn(2+) contacts are provided by Cys73, Cys75, Cys88, and Cys91. Residues Asp464, Asp466, and Asp468 each contribute to the Mg(2+) site. Cys823, Cys897, Cys904, and Cys907 together coordinate Zn(2+).

The protein belongs to the RNA polymerase beta' chain family. As to quaternary structure, the RNAP catalytic core consists of 2 alpha, 1 beta, 1 beta' and 1 omega subunit. When a sigma factor is associated with the core the holoenzyme is formed, which can initiate transcription. Requires Mg(2+) as cofactor. It depends on Zn(2+) as a cofactor.

The enzyme catalyses RNA(n) + a ribonucleoside 5'-triphosphate = RNA(n+1) + diphosphate. Functionally, DNA-dependent RNA polymerase catalyzes the transcription of DNA into RNA using the four ribonucleoside triphosphates as substrates. The sequence is that of DNA-directed RNA polymerase subunit beta' from Gluconacetobacter diazotrophicus (strain ATCC 49037 / DSM 5601 / CCUG 37298 / CIP 103539 / LMG 7603 / PAl5).